The following is a 291-amino-acid chain: Nucleotide-binding protein jk1004 (291 aa).

ATP is bound at residue G16–R23. D67 to S70 provides a ligand contact to GTP.

This sequence belongs to the RapZ-like family.

Displays ATPase and GTPase activities. This chain is Nucleotide-binding protein jk1004, found in Corynebacterium jeikeium (strain K411).